A 284-amino-acid polypeptide reads, in one-letter code: Tropomyosin alpha-1 chain (284 aa).

Positions 1–37 are disordered; sequence MDAIKKKMQMLKLDKENALDRAEQAETDKKAAEERSK. A coiled-coil region spans residues 1 to 284; it reads MDAIKKKMQM…DHALNDMTSI (284 aa). The segment covering 12 to 37 has biased composition (basic and acidic residues); the sequence is KLDKENALDRAEQAETDKKAAEERSK.

This sequence belongs to the tropomyosin family. Homodimer. Heterodimer of an alpha (TPM1, TPM3 or TPM4) and a beta (TPM2) chain.

The protein localises to the cytoplasm. It localises to the cytoskeleton. Functionally, binds to actin filaments in muscle and non-muscle cells. Plays a central role, in association with the troponin complex, in the calcium dependent regulation of vertebrate striated muscle contraction. Smooth muscle contraction is regulated by interaction with caldesmon. In non-muscle cells is implicated in stabilizing cytoskeleton actin filaments. The protein is Tropomyosin alpha-1 chain (tpma) of Danio rerio (Zebrafish).